Reading from the N-terminus, the 131-residue chain is Small ribosomal subunit protein bS6 (131 aa).

Residues 96 to 131 form a disordered region; sequence ITEASPMAKAKDERDSRRGPAGDRSYDEANAEEIAE. A compositionally biased stretch (basic and acidic residues) spans 104-122; it reads KAKDERDSRRGPAGDRSYD.

The protein belongs to the bacterial ribosomal protein bS6 family.

Binds together with bS18 to 16S ribosomal RNA. The polypeptide is Small ribosomal subunit protein bS6 (Shewanella oneidensis (strain ATCC 700550 / JCM 31522 / CIP 106686 / LMG 19005 / NCIMB 14063 / MR-1)).